Reading from the N-terminus, the 210-residue chain is Large ribosomal subunit protein uL4 (210 aa).

A disordered region spans residues Gln46–Ile89. Basic residues predominate over residues Gly60–Gly71.

It belongs to the universal ribosomal protein uL4 family. As to quaternary structure, part of the 50S ribosomal subunit.

In terms of biological role, one of the primary rRNA binding proteins, this protein initially binds near the 5'-end of the 23S rRNA. It is important during the early stages of 50S assembly. It makes multiple contacts with different domains of the 23S rRNA in the assembled 50S subunit and ribosome. Functionally, forms part of the polypeptide exit tunnel. This chain is Large ribosomal subunit protein uL4, found in Prochlorococcus marinus (strain MIT 9215).